A 156-amino-acid polypeptide reads, in one-letter code: Small ribosomal subunit protein uS7 (156 aa).

The protein belongs to the universal ribosomal protein uS7 family. Part of the 30S ribosomal subunit. Contacts proteins S9 and S11.

Its function is as follows. One of the primary rRNA binding proteins, it binds directly to 16S rRNA where it nucleates assembly of the head domain of the 30S subunit. Is located at the subunit interface close to the decoding center, probably blocks exit of the E-site tRNA. The protein is Small ribosomal subunit protein uS7 of Salmonella choleraesuis (strain SC-B67).